Here is a 399-residue protein sequence, read N- to C-terminus: Protein TWIN LOV 1 (399 aa).

The region spanning 26-97 (LWIKEALEEL…MEIREAIREE (72 aa)) is the PAS 1 domain. The region spanning 98-153 (RSVQVSLLNYRKSGSPFWMLFHMCPVFGKDDGKVTNFVAVQVPISGREHHRKKLRN) is the PAC 1 domain. A PAS 2 domain is found at 249-320 (SLVISLGRIK…EMKECILKGQ (72 aa)). Cysteine 296 is subject to S-4a-FMN cysteine. The 57-residue stretch at 320 to 376 (QSCTVQILNYSNRKDKSSFWNLLHISPVRNASGKTAYFVGVQVEASCRNTEIKELRP) folds into the PAC 2 domain.

In terms of assembly, interacts with VTC2, VTC5 and BLH10. FMN binds covalently to cysteine after exposure to blue light and is reversed in the dark.

The chain is Protein TWIN LOV 1 (TLP1) from Arabidopsis thaliana (Mouse-ear cress).